A 151-amino-acid chain; its full sequence is Arginine repressor (151 aa).

The protein belongs to the ArgR family.

Its subcellular location is the cytoplasm. Its pathway is amino-acid biosynthesis; L-arginine biosynthesis [regulation]. Its function is as follows. Regulates arginine biosynthesis genes. This is Arginine repressor from Heliobacterium modesticaldum (strain ATCC 51547 / Ice1).